Here is a 129-residue protein sequence, read N- to C-terminus: Small ribosomal subunit protein uS11 (129 aa).

The protein belongs to the universal ribosomal protein uS11 family. Part of the 30S ribosomal subunit. Interacts with proteins S7 and S18. Binds to IF-3.

Its function is as follows. Located on the platform of the 30S subunit, it bridges several disparate RNA helices of the 16S rRNA. Forms part of the Shine-Dalgarno cleft in the 70S ribosome. In Ectopseudomonas mendocina (strain ymp) (Pseudomonas mendocina), this protein is Small ribosomal subunit protein uS11.